The primary structure comprises 111 residues: Cell division protein FtsB (111 aa).

Residues 1–3 (MGK) are Cytoplasmic-facing. The chain crosses the membrane as a helical span at residues 4–21 (LTLLLLILLGWLQYSLWL). Residues 22-111 (GKNGIHDYVR…TNTPSNNIQR (90 aa)) lie on the Periplasmic side of the membrane. The stretch at 33 to 63 (KDDVVVQQGNNAKLKDRNEQLFAEIDDLNGG) forms a coiled coil. Residues 90 to 111 (ESNHRNANTAPSTNTPSNNIQR) are disordered. Residues 95 to 111 (NANTAPSTNTPSNNIQR) are compositionally biased toward low complexity.

It belongs to the FtsB family. In terms of assembly, part of a complex composed of FtsB, FtsL and FtsQ.

It is found in the cell inner membrane. In terms of biological role, essential cell division protein. May link together the upstream cell division proteins, which are predominantly cytoplasmic, with the downstream cell division proteins, which are predominantly periplasmic. The chain is Cell division protein FtsB from Pectobacterium carotovorum subsp. carotovorum (strain PC1).